We begin with the raw amino-acid sequence, 194 residues long: Ion-translocating oxidoreductase complex subunit A (194 aa).

The next 6 membrane-spanning stretches (helical) occupy residues M1 to V21, C48 to F68, L73 to V93, L103 to M123, V135 to I155, and P172 to I192.

Belongs to the NqrDE/RnfAE family. As to quaternary structure, the complex is composed of six subunits: RnfA, RnfB, RnfC, RnfD, RnfE and RnfG.

The protein resides in the cell inner membrane. Its function is as follows. Part of a membrane-bound complex that couples electron transfer with translocation of ions across the membrane. In Buchnera aphidicola subsp. Baizongia pistaciae (strain Bp), this protein is Ion-translocating oxidoreductase complex subunit A.